Here is a 538-residue protein sequence, read N- to C-terminus: NAD(P)H-quinone oxidoreductase chain 4 (538 aa).

The next 14 membrane-spanning stretches (helical) occupy residues 11–31 (FPWLSLSILFPIVGALIVPFI), 43–63 (YALIISLITFLITVAAYFKGF), 95–115 (MPLILLTSFITSLAVLAAWPV), 119–139 (PKLFFFLILAMDGGQIAVFAV), 143–163 (LLFFLAWELELFPVYLFLAIW), 175–195 (FIIYTAGSSLFILLAGLAMGF), 217–237 (GFQLLCYSGLLIAFGVKLPIV), 251–271 (TAPVHMLLAGILLKMGGYALL), 285–305 (FAPLLIVLGVVNIIYAALTSF), 314–334 (IAYSSISHMGFVLIGIGSFSS), 340–360 (AMLQMVSHGLIGASLFFLVGA), 382–404 (IMFALWTACAFASLALPGMSGFI), 425–445 (IVVASLAAIGVILTPIYLLSM), and 472–492 (IYIIACLLVPIIGIGLYPKIM).

Belongs to the complex I subunit 4 family.

The protein resides in the cellular thylakoid membrane. The catalysed reaction is a plastoquinone + NADH + (n+1) H(+)(in) = a plastoquinol + NAD(+) + n H(+)(out). It catalyses the reaction a plastoquinone + NADPH + (n+1) H(+)(in) = a plastoquinol + NADP(+) + n H(+)(out). Functionally, NDH-1 shuttles electrons from NAD(P)H, via FMN and iron-sulfur (Fe-S) centers, to quinones in the respiratory chain. The immediate electron acceptor for the enzyme in this species is believed to be plastoquinone. Couples the redox reaction to proton translocation (for every two electrons transferred, four hydrogen ions are translocated across the cytoplasmic membrane), and thus conserves the redox energy in a proton gradient. This chain is NAD(P)H-quinone oxidoreductase chain 4, found in Prochlorococcus marinus (strain NATL1A).